Here is a 503-residue protein sequence, read N- to C-terminus: Cardiolipin synthase (503 aa).

The next 3 helical transmembrane spans lie at Leu-5–Trp-25, Ile-29–Phe-49, and Leu-59–Phe-79. PLD phosphodiesterase domains are found at residues Ile-238–Tyr-265 and Thr-416–Ser-443. Active-site residues include His-243, Lys-245, Asp-250, His-421, Lys-423, and Asp-428.

It belongs to the phospholipase D family. Cardiolipin synthase subfamily.

The protein localises to the cell membrane. The enzyme catalyses 2 a 1,2-diacyl-sn-glycero-3-phospho-(1'-sn-glycerol) = a cardiolipin + glycerol. Functionally, catalyzes the reversible phosphatidyl group transfer from one phosphatidylglycerol molecule to another to form cardiolipin (CL) (diphosphatidylglycerol) and glycerol. This chain is Cardiolipin synthase (cls), found in Halalkalibacterium halodurans (strain ATCC BAA-125 / DSM 18197 / FERM 7344 / JCM 9153 / C-125) (Bacillus halodurans).